The sequence spans 205 residues: Probable GTP-binding protein EngB (205 aa).

The EngB-type G domain maps to 21 to 196 (QVPEVAFAGR…VHEVSKCVKE (176 aa)). Residues 29-36 (GRSNVGKS), 56-60 (GSTRQ), 74-77 (DLPG), 141-144 (TKID), and 172-177 (IIGTSS) contribute to the GTP site. Mg(2+)-binding residues include Ser-36 and Thr-58.

It belongs to the TRAFAC class TrmE-Era-EngA-EngB-Septin-like GTPase superfamily. EngB GTPase family. It depends on Mg(2+) as a cofactor.

Its function is as follows. Necessary for normal cell division and for the maintenance of normal septation. This chain is Probable GTP-binding protein EngB, found in Anaplasma marginale (strain Florida).